A 195-amino-acid chain; its full sequence is Peptide deformylase (195 aa).

C102 and H144 together coordinate Fe cation. The active site involves E145. H148 provides a ligand contact to Fe cation.

Belongs to the polypeptide deformylase family. Fe(2+) is required as a cofactor.

The enzyme catalyses N-terminal N-formyl-L-methionyl-[peptide] + H2O = N-terminal L-methionyl-[peptide] + formate. Its function is as follows. Removes the formyl group from the N-terminal Met of newly synthesized proteins. Requires at least a dipeptide for an efficient rate of reaction. N-terminal L-methionine is a prerequisite for activity but the enzyme has broad specificity at other positions. This Salinibacter ruber (strain DSM 13855 / M31) protein is Peptide deformylase.